Reading from the N-terminus, the 54-residue chain is UPF0391 membrane protein TERTU_3637 (54 aa).

Transmembrane regions (helical) follow at residues 4 to 24 (WALV…TGLA) and 29 to 49 (SIAW…LVAG).

The protein belongs to the UPF0391 family.

The protein resides in the cell membrane. In Teredinibacter turnerae (strain ATCC 39867 / T7901), this protein is UPF0391 membrane protein TERTU_3637.